The primary structure comprises 166 residues: MANIEKQAGELQEKLIAVNRVSKTVKGGRIMSFTALTVVGDGNGRVGFGYGKAREVPAAIQKAMEKARRNMINVALHEGTLQHPVKGIHTGSRVFMQPASEGTGIIAGGAMRAVLEVAGVRNVLSKAYGSTNPINVVRATIDALANMKSPEMVAAKRGKTVDEILG.

One can recognise an S5 DRBM domain in the interval 11–74; the sequence is LQEKLIAVNR…EKARRNMINV (64 aa).

This sequence belongs to the universal ribosomal protein uS5 family. Part of the 30S ribosomal subunit. Contacts proteins S4 and S8.

Functionally, with S4 and S12 plays an important role in translational accuracy. Located at the back of the 30S subunit body where it stabilizes the conformation of the head with respect to the body. In Mannheimia succiniciproducens (strain KCTC 0769BP / MBEL55E), this protein is Small ribosomal subunit protein uS5.